Here is a 148-residue protein sequence, read N- to C-terminus: DNA-directed RNA polymerase II subunit GRINL1A, isoforms 4/5 (148 aa).

The segment at 1 to 66 is disordered; the sequence is MATPARAPES…AEFGGAAGNV (66 aa). Low complexity predominate over residues 53–66; it reads GLGAAEFGGAAGNV.

This is DNA-directed RNA polymerase II subunit GRINL1A, isoforms 4/5 (POLR2M) from Homo sapiens (Human).